The primary structure comprises 330 residues: Glycerol-3-phosphate dehydrogenase [NAD(P)+] (330 aa).

Residues S14, F15, R35, and K109 each contribute to the NADPH site. 2 residues coordinate sn-glycerol 3-phosphate: K109 and G137. Residue A141 coordinates NADPH. Residues K192, D248, S258, R259, and N260 each contribute to the sn-glycerol 3-phosphate site. K192 functions as the Proton acceptor in the catalytic mechanism. An NADPH-binding site is contributed by R259. 2 residues coordinate NADPH: L283 and E285.

Belongs to the NAD-dependent glycerol-3-phosphate dehydrogenase family.

The protein localises to the cytoplasm. It carries out the reaction sn-glycerol 3-phosphate + NAD(+) = dihydroxyacetone phosphate + NADH + H(+). The enzyme catalyses sn-glycerol 3-phosphate + NADP(+) = dihydroxyacetone phosphate + NADPH + H(+). Its pathway is membrane lipid metabolism; glycerophospholipid metabolism. Catalyzes the reduction of the glycolytic intermediate dihydroxyacetone phosphate (DHAP) to sn-glycerol 3-phosphate (G3P), the key precursor for phospholipid synthesis. This Rickettsia massiliae (strain Mtu5) protein is Glycerol-3-phosphate dehydrogenase [NAD(P)+].